We begin with the raw amino-acid sequence, 403 residues long: MSHRKFSAPRHGSLGFLPRKRSSRHRGKVKSFPKDDPSKPVHLTAFLGYKAGMTHIVREVDRPGSKVNKKEVVEAVTIVETPPMVVVGIVGYVETPRGLRTFKTVFAEHISDECKRRFYKNWHKSKKKAFTKYCKKWQDEDGKKQLEKDFSSMKKYCQVIRVIAHTQMRLLPLRQKKAHLMEIQVNGGTVAEKLDWARERLEQQVPVNQVFGQDEMIDVIGVTKGKGYKGVTSRWHTKKLPRKTHRGLRKVACIGAWHPARVAFSVARAGQKGYHHRTEINKKIYKIGQGYLIKDGKLIKNNASTDYDLSDKSINPLGGFVHYGEVTNDFVMLKGCVVGTKKRVLTLRKSLLVQTKRRALEKIDLKFIDTTSKFGHGRFQTMEEKKAFMGPLKKDRIAKEEGA.

The interval 1-37 (MSHRKFSAPRHGSLGFLPRKRSSRHRGKVKSFPKDDP) is disordered. Residue Ser13 is modified to Phosphoserine. Basic residues predominate over residues 18–31 (PRKRSSRHRGKVKS). A Glycyl lysine isopeptide (Lys-Gly) (interchain with G-Cter in SUMO2) cross-link involves residue Lys39. Lys136 bears the N6-acetyllysine mark. Residues Lys224 and Lys226 each participate in a glycyl lysine isopeptide (Lys-Gly) (interchain with G-Cter in SUMO2) cross-link. Tele-methylhistidine is present on His245. N6-acetyllysine; alternate occurs at positions 286 and 294. A Glycyl lysine isopeptide (Lys-Gly) (interchain with G-Cter in SUMO2); alternate cross-link involves residue Lys286. A Glycyl lysine isopeptide (Lys-Gly) (interchain with G-Cter in SUMO1); alternate cross-link involves residue Lys294. Position 304 is a phosphoserine (Ser304). Lys366 bears the N6-acetyllysine; alternate mark. Lys366 participates in a covalent cross-link: Glycyl lysine isopeptide (Lys-Gly) (interchain with G-Cter in SUMO2); alternate. Position 373 is an N6-acetyllysine (Lys373). Glycyl lysine isopeptide (Lys-Gly) (interchain with G-Cter in SUMO2) cross-links involve residues Lys386, Lys393, and Lys399.

It belongs to the universal ribosomal protein uL3 family. Component of the large ribosomal subunit. Interacts with DHX33. Post-translationally, constitutively monomethylated at His-245 by METTL18. Methylation at His-245 regulates translation elongation by slowing ribosome traversal on tyrosine codons: slower elongation provides enough time for proper folding of synthesized proteins and prevents cellular aggregation of tyrosine-rich proteins. It is not required for incorporation of RPL3 into ribosomes.

The protein localises to the nucleus. It is found in the nucleolus. It localises to the cytoplasm. Component of the large ribosomal subunit. The ribosome is a large ribonucleoprotein complex responsible for the synthesis of proteins in the cell. This chain is Large ribosomal subunit protein uL3 (RPL3), found in Homo sapiens (Human).